Here is a 132-residue protein sequence, read N- to C-terminus: Agouti-signaling protein (132 aa).

The signal sequence occupies residues 1–22; that stretch reads MDVTRLLLATLLVFLCFFTANS. An N-linked (GlcNAc...) asparagine glycan is attached at N39. Residues 62–85 form a disordered region; sequence IGRKAAEKKRSSKKEASMKKVVRP. Basic and acidic residues predominate over residues 65–79; it reads KAAEKKRSSKKEASM. Cystine bridges form between C93–C108, C100–C114, C107–C125, C111–C132, and C116–C123. The 40-residue stretch at 93 to 132 folds into the Agouti domain; sequence CVATRNSCKPPAPACCDPCASCQCRFFRSACSCRVLSLNC.

In terms of tissue distribution, widely expressed at low levels. Highly expressed in the skin. Expressed in adipose tissue.

The protein localises to the secreted. In terms of biological role, involved in the regulation of melanogenesis. The binding of ASP to MC1R precludes alpha-MSH initiated signaling and thus blocks production of cAMP, leading to a down-regulation of eumelanogenesis (brown/black pigment) and thus increasing synthesis of pheomelanin (yellow/red pigment). In higher primates, agouti may affect the quality of hair pigmentation rather than its pattern of deposition. Could well play a role in neuroendocrine aspects of melanocortin action. May have some functional role in regulating the lipid metabolism with adipocytes. The sequence is that of Agouti-signaling protein (ASIP) from Homo sapiens (Human).